A 333-amino-acid chain; its full sequence is Protoheme IX farnesyltransferase (333 aa).

Residues 1-13 (MVSSTSQIISTSP) are compositionally biased toward low complexity. The interval 1-21 (MVSSTSQIISTSPSRDDVVPS) is disordered. Helical transmembrane passes span 38-58 (LIPL…GWPL), 63-83 (LACT…LNCL), 109-129 (AVFT…VSGV), 132-152 (LAAG…TAFL), 160-180 (IVIG…AATG), 188-208 (WLFA…AILL), 245-265 (CFGV…LVPF), and 286-306 (AKGL…LLVV).

It belongs to the UbiA prenyltransferase family. Protoheme IX farnesyltransferase subfamily.

It localises to the cell inner membrane. The enzyme catalyses heme b + (2E,6E)-farnesyl diphosphate + H2O = Fe(II)-heme o + diphosphate. It participates in porphyrin-containing compound metabolism; heme O biosynthesis; heme O from protoheme: step 1/1. In terms of biological role, converts heme B (protoheme IX) to heme O by substitution of the vinyl group on carbon 2 of heme B porphyrin ring with a hydroxyethyl farnesyl side group. The chain is Protoheme IX farnesyltransferase from Prochlorococcus marinus (strain SARG / CCMP1375 / SS120).